We begin with the raw amino-acid sequence, 299 residues long: Ribosomal protein L11 methyltransferase (299 aa).

S-adenosyl-L-methionine-binding residues include T144, G165, D187, and N229.

The protein belongs to the methyltransferase superfamily. PrmA family.

It localises to the cytoplasm. It catalyses the reaction L-lysyl-[protein] + 3 S-adenosyl-L-methionine = N(6),N(6),N(6)-trimethyl-L-lysyl-[protein] + 3 S-adenosyl-L-homocysteine + 3 H(+). Methylates ribosomal protein L11. The protein is Ribosomal protein L11 methyltransferase of Teredinibacter turnerae (strain ATCC 39867 / T7901).